Consider the following 82-residue polypeptide: NAD(P)H-quinone oxidoreductase subunit O, organellar chromatophore (82 aa).

Belongs to the complex I NdhO subunit family. In terms of assembly, NDH-1 can be composed of about 15 different subunits; different subcomplexes with different compositions have been identified which probably have different functions.

It is found in the plastid. The protein resides in the organellar chromatophore thylakoid membrane. It carries out the reaction a plastoquinone + NADH + (n+1) H(+)(in) = a plastoquinol + NAD(+) + n H(+)(out). It catalyses the reaction a plastoquinone + NADPH + (n+1) H(+)(in) = a plastoquinol + NADP(+) + n H(+)(out). NDH-1 shuttles electrons from an unknown electron donor, via FMN and iron-sulfur (Fe-S) centers, to quinones in the respiratory and/or the photosynthetic chain. The immediate electron acceptor for the enzyme in this species is believed to be plastoquinone. Couples the redox reaction to proton translocation, and thus conserves the redox energy in a proton gradient. Cyanobacterial NDH-1 also plays a role in inorganic carbon-concentration. This is NAD(P)H-quinone oxidoreductase subunit O, organellar chromatophore from Paulinella chromatophora.